The sequence spans 156 residues: Methylated-DNA--protein-cysteine methyltransferase (156 aa).

Cysteine 126 serves as the catalytic Nucleophile; methyl group acceptor.

The protein belongs to the MGMT family.

The protein localises to the cytoplasm. It catalyses the reaction a 6-O-methyl-2'-deoxyguanosine in DNA + L-cysteinyl-[protein] = S-methyl-L-cysteinyl-[protein] + a 2'-deoxyguanosine in DNA. The catalysed reaction is a 4-O-methyl-thymidine in DNA + L-cysteinyl-[protein] = a thymidine in DNA + S-methyl-L-cysteinyl-[protein]. Involved in the cellular defense against the biological effects of O6-methylguanine (O6-MeG) and O4-methylthymine (O4-MeT) in DNA. Repairs the methylated nucleobase in DNA by stoichiometrically transferring the methyl group to a cysteine residue in the enzyme. This is a suicide reaction: the enzyme is irreversibly inactivated. This is Methylated-DNA--protein-cysteine methyltransferase from Methanosarcina acetivorans (strain ATCC 35395 / DSM 2834 / JCM 12185 / C2A).